A 312-amino-acid polypeptide reads, in one-letter code: Cytochrome c biogenesis protein CcsA (312 aa).

Transmembrane regions (helical) follow at residues 18 to 38, 48 to 68, 73 to 93, 102 to 122, 148 to 168, 216 to 236, 250 to 267, and 279 to 299; these read LGIL…LALF, FFTI…WILS, ISNL…GQLL, IIPV…CFVL, VMLS…VLFI, SILV…IWAN, TWAF…HMRI, and FATS…FLGI.

Belongs to the CcmF/CycK/Ccl1/NrfE/CcsA family. As to quaternary structure, may interact with ccs1.

It is found in the cellular thylakoid membrane. In terms of biological role, required during biogenesis of c-type cytochromes (cytochrome c6 and cytochrome f) at the step of heme attachment. This is Cytochrome c biogenesis protein CcsA from Prochlorococcus marinus (strain MIT 9515).